The primary structure comprises 1108 residues: Eukaryotic translation initiation factor 2-alpha kinase 3 (1108 aa).

A signal peptide spans 1-27 (MERATQPRPRALLLLFLLLGCAAGISA). Residues 28 to 506 (VARARSLLAP…HYSKNIRKKD (479 aa)) lie on the Lumenal side of the membrane. The disordered stretch occupies residues 71-92 (EALPAASGEQESRATESDDDVE). Residue asparagine 253 is glycosylated (N-linked (GlcNAc...) asparagine). Residues 507-527 (PILLLHWWKEIFGTILLCIVA) form a helical membrane-spanning segment. At 528–1108 (TTFIVRRLFH…SSTFSPLPGN (581 aa)) the chain is on the cytoplasmic side. Residues 542–563 (RQRKESETQCQTESKYDSVSAD) are disordered. One can recognise a Protein kinase domain in the interval 585–1069 (FEPIQCMGRG…ATDIIENAVF (485 aa)). 591–599 (MGRGGFGVV) provides a ligand contact to ATP. Tyrosine 611 is modified (phosphotyrosine; by autocatalysis). Lysine 614 is a binding site for ATP. The segment at 639-880 (EHPGIVRYFN…SPKVYLYIQM (242 aa)) is insert loop. Position 707 is a phosphoserine (serine 707). 2 disordered regions span residues 772–818 (DEGH…RMNR) and 832–856 (FKHS…TTLS). Polar residues predominate over residues 785–798 (SPYTRSREGTSSSI). Threonine 794 carries the phosphothreonine modification. Positions 837–856 (SRSSSEATLSTSPTRPTTLS) are enriched in low complexity. Residue aspartate 929 is the Proton acceptor of the active site. Position 974 is a phosphothreonine (threonine 974). The disordered stretch occupies residues 1080–1108 (LRQRSRSLSSSGTKHSRQPSSTFSPLPGN). At serine 1086 the chain carries Phosphoserine. Residues 1097–1108 (QPSSTFSPLPGN) show a composition bias toward polar residues.

This sequence belongs to the protein kinase superfamily. Ser/Thr protein kinase family. GCN2 subfamily. As to quaternary structure, forms dimers with HSPA5/BIP in resting cells. Homotetramerizes in response to endoplasmic reticulum (ER) stress, leading to its activation. Interacts with HSP90B1/GRP94. Interacts with DNAJC3; inhibiting EIF2AK3/PERK activity. Interacts with ATAD3A; ATAD3A and EIF2S1/eIF-2-alpha occupy a common binding site within the cytoplasmic loop of EIF2AK3/PERK, leading to prevent EIF2AK3/PERK association with its substrate EIF2S1/eIF-2-alpha. Interacts with MFN2. Interacts with TMEM33. Interacts with PDIA6. Interacts with LACC1. Oligomerization of the N-terminal ER luminal domain by ER stress promotes EIF2AK3/PERK trans-autophosphorylation of the C-terminal cytoplasmic kinase domain at multiple residues including Thr-974 on the kinase activation loop. Autophosphorylated at Tyr-611 following endoplasmic reticulum stress, leading to activate its activity. Dephosphorylated at Tyr-611 by PTPN1/PTP1B, leading to inactivate its enzyme activity. Phosphorylation at Thr-794 by AKT (AKT1, AKT2 and/or AKT3) inactivates EIF2AK3/PERK. In terms of processing, ADP-ribosylated by PARP16 upon ER stress, which increases kinase activity. As to expression, ubiquitous.

The protein localises to the endoplasmic reticulum membrane. The catalysed reaction is L-seryl-[protein] + ATP = O-phospho-L-seryl-[protein] + ADP + H(+). It carries out the reaction L-threonyl-[protein] + ATP = O-phospho-L-threonyl-[protein] + ADP + H(+). The enzyme catalyses L-tyrosyl-[protein] + ATP = O-phospho-L-tyrosyl-[protein] + ADP + H(+). Its activity is regulated as follows. Inhibited by HSPA5/BIP in absence of stress. Perturbation in protein folding in the endoplasmic reticulum (ER) promotes reversible dissociation from HSPA5/BIP and oligomerization, resulting in trans-autophosphorylation and kinase activity induction. Inactivated following phosphorylation at Thr-794 by AKT (AKT1, AKT2 and/or AKT3). Inhibited by ATAD3A at mitochondria-endoplasmic reticulum contact sites, providing a safe haven for mitochondrial protein translation during ER stress. Metabolic-stress sensing protein kinase that phosphorylates the alpha subunit of eukaryotic translation initiation factor 2 (EIF2S1/eIF-2-alpha) in response to various stress, such as unfolded protein response (UPR). Key effector of the integrated stress response (ISR) to unfolded proteins: EIF2AK3/PERK specifically recognizes and binds misfolded proteins, leading to its activation and EIF2S1/eIF-2-alpha phosphorylation. EIF2S1/eIF-2-alpha phosphorylation in response to stress converts EIF2S1/eIF-2-alpha in a global protein synthesis inhibitor, leading to a global attenuation of cap-dependent translation, while concomitantly initiating the preferential translation of ISR-specific mRNAs, such as the transcriptional activators ATF4 and QRICH1, and hence allowing ATF4- and QRICH1-mediated reprogramming. The EIF2AK3/PERK-mediated unfolded protein response increases mitochondrial oxidative phosphorylation by promoting ATF4-mediated expression of COX7A2L/SCAF1, thereby increasing formation of respiratory chain supercomplexes. In contrast to most subcellular compartments, mitochondria are protected from the EIF2AK3/PERK-mediated unfolded protein response due to EIF2AK3/PERK inhibition by ATAD3A at mitochondria-endoplasmic reticulum contact sites. In addition to EIF2S1/eIF-2-alpha, also phosphorylates NFE2L2/NRF2 in response to stress, promoting release of NFE2L2/NRF2 from the BCR(KEAP1) complex, leading to nuclear accumulation and activation of NFE2L2/NRF2. Serves as a critical effector of unfolded protein response (UPR)-induced G1 growth arrest due to the loss of cyclin-D1 (CCND1). Involved in control of mitochondrial morphology and function. This chain is Eukaryotic translation initiation factor 2-alpha kinase 3 (Eif2ak3), found in Rattus norvegicus (Rat).